The chain runs to 370 residues: Chaperone protein DnaJ (370 aa).

A J domain is found at 6–70; it reads DYYEVLGVQR…EKRSMYDRFG (65 aa). The CR-type zinc-finger motif lies at 128–208; the sequence is GVEKTIEFRR…CRGEGRVRQT (81 aa). Positions 141, 144, 158, 161, 182, 185, 196, and 199 each coordinate Zn(2+). CXXCXGXG motif repeat units follow at residues 141–148, 158–165, 182–189, and 196–203; these read CPACRGSG, CPKCGGLG, CDMCRGEG, and CRECRGEG.

Belongs to the DnaJ family. Homodimer. Requires Zn(2+) as cofactor.

The protein localises to the cytoplasm. Its function is as follows. Participates actively in the response to hyperosmotic and heat shock by preventing the aggregation of stress-denatured proteins and by disaggregating proteins, also in an autonomous, DnaK-independent fashion. Unfolded proteins bind initially to DnaJ; upon interaction with the DnaJ-bound protein, DnaK hydrolyzes its bound ATP, resulting in the formation of a stable complex. GrpE releases ADP from DnaK; ATP binding to DnaK triggers the release of the substrate protein, thus completing the reaction cycle. Several rounds of ATP-dependent interactions between DnaJ, DnaK and GrpE are required for fully efficient folding. Also involved, together with DnaK and GrpE, in the DNA replication of plasmids through activation of initiation proteins. In Roseiflexus sp. (strain RS-1), this protein is Chaperone protein DnaJ.